Reading from the N-terminus, the 214-residue chain is Thymidylate kinase (214 aa).

Position 10-17 (10-17) interacts with ATP; the sequence is GGEGVGKT.

It belongs to the thymidylate kinase family.

It catalyses the reaction dTMP + ATP = dTDP + ADP. Functionally, phosphorylation of dTMP to form dTDP in both de novo and salvage pathways of dTTP synthesis. The sequence is that of Thymidylate kinase from Bartonella quintana (strain Toulouse) (Rochalimaea quintana).